A 1600-amino-acid polypeptide reads, in one-letter code: THO complex subunit 2 (1600 aa).

Residues 1–163 (MAAAAVVVPA…KLFYKQQKFN (163 aa)) form an anchor domain; interaction with THOC5 and THOC7 region. Positions 164–534 (LLREENEGYA…GQWKNETYNS (371 aa)) are bow domain; interaction with THOC1 dock domain and THOC3. The stretch at 293-339 (NCIMDEHKREIAEAKQIVRKLTMVVLSSEKMDDREKEKEKEEEKVEK) forms a coiled coil. A disordered region spans residues 321 to 341 (EKMDDREKEKEKEEEKVEKPP). Residues 535–686 (HPLLVKVKAQ…LILKEVVQKM (152 aa)) are MIF4G domain; interaction with THOC3 and DDX39B. A stern domain region spans residues 687-1174 (AGIEITEEMT…LAMGYSGQLK (488 aa)). Residues 896–965 (HTSYEREVNK…LKLEKDNWLL (70 aa)) adopt a coiled-coil conformation. The Nuclear localization signal signature appears at 923-928 (KKKKEK). A charged domain region spans residues 1175 to 1597 (SRKSYMIPEN…FHLDVFSQYN (423 aa)). Residues 1184–1600 (NEFHHKDPSP…DVFSQYNGKL (417 aa)) are disordered. The segment covering 1208-1217 (PSPSSTGSTS) has biased composition (low complexity). Residues 1218 to 1234 (KSDESSAEETDKSRERS) are compositionally biased toward basic and acidic residues. Position 1222 is a phosphoserine (serine 1222). Residues 1251–1263 (GNSSNGNSGSNSN) show a composition bias toward low complexity. 3 stretches are compositionally biased toward basic and acidic residues: residues 1265–1285 (AVKE…KEKT), 1294–1343 (ILGK…EKFK), and 1353–1383 (SSQE…KGGE). Threonine 1385 is subject to Phosphothreonine. Serine 1390, serine 1393, and serine 1417 each carry phosphoserine. A compositionally biased stretch (polar residues) spans 1416-1425 (PSPSHSSTVK). Phosphothreonine is present on threonine 1443. Over residues 1449 to 1504 (KSKEREMDKKDLDKSRERSREREKKDEKDRKERKRDHSNSDREVPPDLTKRRKEEN) the composition is skewed to basic and acidic residues. A phosphoserine mark is found at serine 1450, serine 1486, and serine 1516. Residues 1464–1491 (RERSREREKKDEKDRKERKRDHSNSDRE) adopt a coiled-coil conformation. The span at 1524–1585 (NEKDKEKNKS…SSGGKEEKKQ (62 aa)) shows a compositional bias: basic and acidic residues.

This sequence belongs to the THOC2 family. As to quaternary structure, component of the THO subcomplex, which is composed of THOC1, THOC2, THOC3, THOC5, THOC6 and THOC7. The THO subcomplex interacts with DDX39B to form the THO-DDX39B complex which multimerizes into a 28-subunit tetrameric assembly. Component of the transcription/export (TREX) complex at least composed of ALYREF/THOC4, DDX39B, SARNP/CIP29, CHTOP and the THO subcomplex; in the complex interacts with THOC1, THOC3, THOC5, THOC7 and DDX39B. TREX seems to have a dynamic structure involving ATP-dependent remodeling. Interacts with POLDIP3 and ZC3H11A.

It localises to the nucleus. Its subcellular location is the nucleus speckle. It is found in the cytoplasm. In terms of biological role, component of the THO subcomplex of the TREX complex which is thought to couple mRNA transcription, processing and nuclear export, and which specifically associates with spliced mRNA and not with unspliced pre-mRNA. Required for efficient export of polyadenylated RNA and spliced mRNA. The THOC1-THOC2-THOC3 core complex alone is sufficient to bind export factor NXF1-NXT1 and promote ATPase activity of DDX39B; in the complex THOC2 is the only component that directly interacts with DDX39B. TREX is recruited to spliced mRNAs by a transcription-independent mechanism, binds to mRNA upstream of the exon-junction complex (EJC) and is recruited in a splicing- and cap-dependent manner to a region near the 5' end of the mRNA where it functions in mRNA export to the cytoplasm via the TAP/NXF1 pathway. Required for NXF1 localization to the nuclear rim. THOC2 (and probably the THO complex) is involved in releasing mRNA from nuclear speckle domains. Plays a role for proper neuronal development. The chain is THO complex subunit 2 (THOC2) from Plecturocebus moloch (Dusky titi monkey).